The primary structure comprises 193 residues: DNA damage-inducible transcript 4-like protein (193 aa).

This sequence belongs to the DDIT4 family. In terms of tissue distribution, expressed in heart, skeletal muscle and testis.

Its subcellular location is the cytoplasm. Its function is as follows. Inhibits cell growth by regulating the TOR signaling pathway upstream of the TSC1-TSC2 complex and downstream of AKT1. This Rattus norvegicus (Rat) protein is DNA damage-inducible transcript 4-like protein (Ddit4l).